We begin with the raw amino-acid sequence, 179 residues long: tRNA (cytidine(56)-2'-O)-methyltransferase (179 aa).

Residues Leu-82, 110 to 114, and 128 to 135 contribute to the S-adenosyl-L-methionine site; these read GAEKV and VGNQPHSE.

Belongs to the aTrm56 family. As to quaternary structure, homodimer.

It is found in the cytoplasm. The enzyme catalyses cytidine(56) in tRNA + S-adenosyl-L-methionine = 2'-O-methylcytidine(56) in tRNA + S-adenosyl-L-homocysteine + H(+). Specifically catalyzes the AdoMet-dependent 2'-O-ribose methylation of cytidine at position 56 in tRNAs. The sequence is that of tRNA (cytidine(56)-2'-O)-methyltransferase from Methanocaldococcus jannaschii (strain ATCC 43067 / DSM 2661 / JAL-1 / JCM 10045 / NBRC 100440) (Methanococcus jannaschii).